The primary structure comprises 261 residues: Carbonic anhydrase 1 (261 aa).

At A2 the chain carries N-acetylalanine. The region spanning 4-261 (PDWGYDDKNG…LKGRTVRASF (258 aa)) is the Alpha-carbonic anhydrase domain. H65 functions as the Proton donor/acceptor in the catalytic mechanism. Zn(2+) contacts are provided by H95, H97, and H120. Substrate is bound by residues T200 and 200-201 (TH). The interval 235 to 261 (EGDNPVPSQRNNRPTQPLKGRTVRASF) is disordered. Residues 240-249 (VPSQRNNRPT) are compositionally biased toward polar residues.

This sequence belongs to the alpha-carbonic anhydrase family. Requires Zn(2+) as cofactor.

The protein resides in the cytoplasm. It catalyses the reaction hydrogencarbonate + H(+) = CO2 + H2O. The enzyme catalyses urea = cyanamide + H2O. Its activity is regulated as follows. Inhibited by acetazolamide. In terms of biological role, catalyzes the reversible hydration of carbon dioxide. Can hydrate cyanamide to urea. This chain is Carbonic anhydrase 1 (CA1), found in Macaca nemestrina (Pig-tailed macaque).